The sequence spans 230 residues: 5'-methylthioadenosine/S-adenosylhomocysteine nucleosidase (230 aa).

The Proton acceptor role is filled by Glu12. Substrate-binding positions include Gly78, Ile152, and 173–174 (ME). Asp197 acts as the Proton donor in catalysis.

The protein belongs to the PNP/UDP phosphorylase family. MtnN subfamily.

The catalysed reaction is S-adenosyl-L-homocysteine + H2O = S-(5-deoxy-D-ribos-5-yl)-L-homocysteine + adenine. It carries out the reaction S-methyl-5'-thioadenosine + H2O = 5-(methylsulfanyl)-D-ribose + adenine. The enzyme catalyses 5'-deoxyadenosine + H2O = 5-deoxy-D-ribose + adenine. It functions in the pathway amino-acid biosynthesis; L-methionine biosynthesis via salvage pathway; S-methyl-5-thio-alpha-D-ribose 1-phosphate from S-methyl-5'-thioadenosine (hydrolase route): step 1/2. Its function is as follows. Catalyzes the irreversible cleavage of the glycosidic bond in both 5'-methylthioadenosine (MTA) and S-adenosylhomocysteine (SAH/AdoHcy) to adenine and the corresponding thioribose, 5'-methylthioribose and S-ribosylhomocysteine, respectively. Also cleaves 5'-deoxyadenosine, a toxic by-product of radical S-adenosylmethionine (SAM) enzymes, into 5-deoxyribose and adenine. This Haemophilus influenzae (strain 86-028NP) protein is 5'-methylthioadenosine/S-adenosylhomocysteine nucleosidase.